Reading from the N-terminus, the 435-residue chain is 3-phosphoshikimate 1-carboxyvinyltransferase (435 aa).

Residues Lys22, Ser23, and Arg27 each contribute to the 3-phosphoshikimate site. Lys22 serves as a coordination point for phosphoenolpyruvate. Positions 95 and 123 each coordinate phosphoenolpyruvate. Ser168, Gln170, Asp319, and Lys346 together coordinate 3-phosphoshikimate. Gln170 lines the phosphoenolpyruvate pocket. Asp319 functions as the Proton acceptor in the catalytic mechanism. Residues Arg350 and Arg393 each coordinate phosphoenolpyruvate.

The protein belongs to the EPSP synthase family. As to quaternary structure, monomer.

It is found in the cytoplasm. The enzyme catalyses 3-phosphoshikimate + phosphoenolpyruvate = 5-O-(1-carboxyvinyl)-3-phosphoshikimate + phosphate. It functions in the pathway metabolic intermediate biosynthesis; chorismate biosynthesis; chorismate from D-erythrose 4-phosphate and phosphoenolpyruvate: step 6/7. Catalyzes the transfer of the enolpyruvyl moiety of phosphoenolpyruvate (PEP) to the 5-hydroxyl of shikimate-3-phosphate (S3P) to produce enolpyruvyl shikimate-3-phosphate and inorganic phosphate. The sequence is that of 3-phosphoshikimate 1-carboxyvinyltransferase from Chloroflexus aggregans (strain MD-66 / DSM 9485).